The chain runs to 454 residues: Pyrrolysine--tRNA ligase (454 aa).

The disordered stretch occupies residues 102-138 (TRTKKAMPKSVARAPKPLENTEAAQAQPSGSKFSPAI). Residues 123–133 (EAAQAQPSGSK) show a composition bias toward polar residues.

It belongs to the class-II aminoacyl-tRNA synthetase family.

Its subcellular location is the cytoplasm. The catalysed reaction is tRNA(Pyl) + L-pyrrolysine + ATP = L-pyrrolysyl-tRNA(Pyl) + AMP + diphosphate. In terms of biological role, catalyzes the attachment of pyrrolysine to tRNA(Pyl). Pyrrolysine is a lysine derivative encoded by the termination codon UAG. The protein is Pyrrolysine--tRNA ligase of Methanosarcina mazei (strain ATCC BAA-159 / DSM 3647 / Goe1 / Go1 / JCM 11833 / OCM 88) (Methanosarcina frisia).